The sequence spans 515 residues: Lysine--tRNA ligase (515 aa).

Residues E425 and E432 each contribute to the Mg(2+) site.

It belongs to the class-II aminoacyl-tRNA synthetase family. As to quaternary structure, homodimer. The cofactor is Mg(2+).

Its subcellular location is the cytoplasm. It carries out the reaction tRNA(Lys) + L-lysine + ATP = L-lysyl-tRNA(Lys) + AMP + diphosphate. This Cupriavidus metallidurans (strain ATCC 43123 / DSM 2839 / NBRC 102507 / CH34) (Ralstonia metallidurans) protein is Lysine--tRNA ligase.